A 99-amino-acid chain; its full sequence is Aspartyl/glutamyl-tRNA(Asn/Gln) amidotransferase subunit C (99 aa).

It belongs to the GatC family. In terms of assembly, heterotrimer of A, B and C subunits.

It carries out the reaction L-glutamyl-tRNA(Gln) + L-glutamine + ATP + H2O = L-glutaminyl-tRNA(Gln) + L-glutamate + ADP + phosphate + H(+). It catalyses the reaction L-aspartyl-tRNA(Asn) + L-glutamine + ATP + H2O = L-asparaginyl-tRNA(Asn) + L-glutamate + ADP + phosphate + 2 H(+). Functionally, allows the formation of correctly charged Asn-tRNA(Asn) or Gln-tRNA(Gln) through the transamidation of misacylated Asp-tRNA(Asn) or Glu-tRNA(Gln) in organisms which lack either or both of asparaginyl-tRNA or glutaminyl-tRNA synthetases. The reaction takes place in the presence of glutamine and ATP through an activated phospho-Asp-tRNA(Asn) or phospho-Glu-tRNA(Gln). The polypeptide is Aspartyl/glutamyl-tRNA(Asn/Gln) amidotransferase subunit C (Solibacter usitatus (strain Ellin6076)).